The chain runs to 159 residues: Small ribosomal subunit protein uS7 (159 aa).

Belongs to the universal ribosomal protein uS7 family. Part of the 30S ribosomal subunit. Contacts proteins S9 and S11.

In terms of biological role, one of the primary rRNA binding proteins, it binds directly to 16S rRNA where it nucleates assembly of the head domain of the 30S subunit. Is located at the subunit interface close to the decoding center, probably blocks exit of the E-site tRNA. The chain is Small ribosomal subunit protein uS7 from Rickettsia felis (strain ATCC VR-1525 / URRWXCal2) (Rickettsia azadi).